Consider the following 456-residue polypeptide: Probable glycine dehydrogenase (decarboxylating) subunit 1 (456 aa).

The protein belongs to the GcvP family. N-terminal subunit subfamily. As to quaternary structure, the glycine cleavage system is composed of four proteins: P, T, L and H. In this organism, the P 'protein' is a heterodimer of two subunits.

It catalyses the reaction N(6)-[(R)-lipoyl]-L-lysyl-[glycine-cleavage complex H protein] + glycine + H(+) = N(6)-[(R)-S(8)-aminomethyldihydrolipoyl]-L-lysyl-[glycine-cleavage complex H protein] + CO2. Functionally, the glycine cleavage system catalyzes the degradation of glycine. The P protein binds the alpha-amino group of glycine through its pyridoxal phosphate cofactor; CO(2) is released and the remaining methylamine moiety is then transferred to the lipoamide cofactor of the H protein. This Legionella pneumophila (strain Paris) protein is Probable glycine dehydrogenase (decarboxylating) subunit 1.